A 342-amino-acid polypeptide reads, in one-letter code: Peptide chain release factor 1 (342 aa).

Gln211 bears the N5-methylglutamine mark. Residues 262-282 (KEREISQKRKSQIGTGERSEK) are disordered.

It belongs to the prokaryotic/mitochondrial release factor family. Methylated by PrmC. Methylation increases the termination efficiency of RF1.

Its subcellular location is the cytoplasm. In terms of biological role, peptide chain release factor 1 directs the termination of translation in response to the peptide chain termination codons UAG and UAA. The sequence is that of Peptide chain release factor 1 (prfA) from Thermotoga maritima (strain ATCC 43589 / DSM 3109 / JCM 10099 / NBRC 100826 / MSB8).